The sequence spans 373 residues: Chaperone protein DnaJ (373 aa).

Positions 5 to 70 constitute a J domain; that stretch reads DFYATLGVAR…EKRAMYDQYG (66 aa). The CR-type zinc-finger motif lies at 134-212; that stretch reads GVKKRINIPT…CRGVGRNKAV (79 aa). Cys-147, Cys-150, Cys-164, Cys-167, Cys-186, Cys-189, Cys-200, and Cys-203 together coordinate Zn(2+). CXXCXGXG motif repeat units lie at residues 147-154, 164-171, 186-193, and 200-207; these read CDVCNGSG, CPTCKGSG, CPTCRGAG, and CVKCRGVG.

This sequence belongs to the DnaJ family. In terms of assembly, homodimer. Zn(2+) serves as cofactor.

It localises to the cytoplasm. Participates actively in the response to hyperosmotic and heat shock by preventing the aggregation of stress-denatured proteins and by disaggregating proteins, also in an autonomous, DnaK-independent fashion. Unfolded proteins bind initially to DnaJ; upon interaction with the DnaJ-bound protein, DnaK hydrolyzes its bound ATP, resulting in the formation of a stable complex. GrpE releases ADP from DnaK; ATP binding to DnaK triggers the release of the substrate protein, thus completing the reaction cycle. Several rounds of ATP-dependent interactions between DnaJ, DnaK and GrpE are required for fully efficient folding. Also involved, together with DnaK and GrpE, in the DNA replication of plasmids through activation of initiation proteins. The sequence is that of Chaperone protein DnaJ from Neisseria gonorrhoeae (strain ATCC 700825 / FA 1090).